Consider the following 148-residue polypeptide: Ribonuclease H (148 aa).

Residues 1–143 (MNQVVIYTDG…ADMLANKGVE (143 aa)) form the RNase H type-1 domain. Mg(2+) contacts are provided by aspartate 9, glutamate 47, aspartate 69, and aspartate 135.

It belongs to the RNase H family. In terms of assembly, monomer. Requires Mg(2+) as cofactor.

The protein localises to the cytoplasm. The catalysed reaction is Endonucleolytic cleavage to 5'-phosphomonoester.. Endonuclease that specifically degrades the RNA of RNA-DNA hybrids. The chain is Ribonuclease H from Acidovorax sp. (strain JS42).